Consider the following 180-residue polypeptide: Cytochrome b6-f complex iron-sulfur subunit (180 aa).

A helical transmembrane segment spans residues 21 to 43 (LLTFGTITGTALGALYPVVKYFI). The 97-residue stretch at 66–162 (VSEYLAKHLP…ATVTEDDKLV (97 aa)) folds into the Rieske domain. The [2Fe-2S] cluster site is built by Cys-108, His-110, Cys-126, and His-129. Cys-113 and Cys-128 are joined by a disulfide.

Belongs to the Rieske iron-sulfur protein family. As to quaternary structure, the 4 large subunits of the cytochrome b6-f complex are cytochrome b6, subunit IV (17 kDa polypeptide, PetD), cytochrome f and the Rieske protein, while the 4 small subunits are PetG, PetL, PetM and PetN. The complex functions as a dimer. [2Fe-2S] cluster is required as a cofactor.

The protein localises to the cellular thylakoid membrane. The catalysed reaction is 2 oxidized [plastocyanin] + a plastoquinol + 2 H(+)(in) = 2 reduced [plastocyanin] + a plastoquinone + 4 H(+)(out). Component of the cytochrome b6-f complex, which mediates electron transfer between photosystem II (PSII) and photosystem I (PSI), cyclic electron flow around PSI, and state transitions. This Thermosynechococcus vestitus (strain NIES-2133 / IAM M-273 / BP-1) protein is Cytochrome b6-f complex iron-sulfur subunit.